A 323-amino-acid polypeptide reads, in one-letter code: NADH-ubiquinone oxidoreductase chain 1 (323 aa).

Helical transmembrane passes span 10 to 30, 52 to 72, 84 to 104, 119 to 139, 157 to 177, 189 to 209, 245 to 265, 268 to 288, and 302 to 322; these read LLYI…GLLI, PNVV…KLVL, IIYA…WSVI, VIFI…AGWA, VSYE…AGTV, VWFI…ALAE, YANI…GIVS, ISGA…RATL, and KSLL…VLII.

Belongs to the complex I subunit 1 family.

The protein resides in the mitochondrion inner membrane. It catalyses the reaction a ubiquinone + NADH + 5 H(+)(in) = a ubiquinol + NAD(+) + 4 H(+)(out). Its function is as follows. Core subunit of the mitochondrial membrane respiratory chain NADH dehydrogenase (Complex I) that is believed to belong to the minimal assembly required for catalysis. Complex I functions in the transfer of electrons from NADH to the respiratory chain. The immediate electron acceptor for the enzyme is believed to be ubiquinone. This is NADH-ubiquinone oxidoreductase chain 1 (nad1) from Dictyostelium citrinum (Slime mold).